The chain runs to 424 residues: Delta(14)-sterol reductase erg24 (424 aa).

The next 2 membrane-spanning stretches (helical) occupy residues 19–39 (IGAL…FYIC) and 112–132 (LILG…MEFI). Residues lysine 317, arginine 321, leucine 344, tryptophan 349, and 356–357 (NY) contribute to the NADP(+) site. A helical membrane pass occupies residues 370–390 (PAGFGSPIPYFYVAYFGVLLV). NADP(+) contacts are provided by residues aspartate 396, 400-404 (CRVKY), and tyrosine 411.

It belongs to the ERG4/ERG24 family.

It localises to the endoplasmic reticulum membrane. It carries out the reaction 4,4-dimethyl-5alpha-cholesta-8,24-dien-3beta-ol + NADP(+) = 4,4-dimethyl-5alpha-cholesta-8,14,24-trien-3beta-ol + NADPH + H(+). It functions in the pathway steroid biosynthesis; zymosterol biosynthesis; zymosterol from lanosterol: step 2/6. It participates in steroid metabolism; ergosterol biosynthesis. Delta(14)-sterol reductase; part of the third module of ergosterol biosynthesis pathway that includes by the late steps of the pathway. Erg24 reduces the C14=C15 double bond of 4,4-dimethyl-cholesta-8,14,24-trienol to produce 4,4-dimethyl-cholesta-8,24-dienol. The third module or late pathway involves the ergosterol synthesis itself through consecutive reactions that mainly occur in the endoplasmic reticulum (ER) membrane. Firstly, the squalene synthase erg9 catalyzes the condensation of 2 farnesyl pyrophosphate moieties to form squalene, which is the precursor of all steroids. Secondly, squalene is converted into lanosterol by the consecutive action of the squalene epoxidase erg1 and the lanosterol synthase erg7. The lanosterol 14-alpha-demethylase erg11/cyp1 catalyzes C14-demethylation of lanosterol to produce 4,4'-dimethyl cholesta-8,14,24-triene-3-beta-ol. In the next steps, a complex process involving various demethylation, reduction and desaturation reactions catalyzed by the C-14 reductase erg24 and the C-4 demethylation complex erg25-erg26-erg27 leads to the production of zymosterol. Erg28 likely functions in the C-4 demethylation complex reaction by tethering erg26 and Erg27 to the endoplasmic reticulum or to facilitate interaction between these proteins. Then, the sterol 24-C-methyltransferase erg6 catalyzes the methyl transfer from S-adenosyl-methionine to the C-24 of zymosterol to form fecosterol. The C-8 sterol isomerase erg2 catalyzes the reaction which results in unsaturation at C-7 in the B ring of sterols and thus converts fecosterol to episterol. The sterol-C5-desaturases erg31 and erg32 then catalyze the introduction of a C-5 double bond in the B ring to produce 5-dehydroepisterol. The C-22 sterol desaturase erg5 further converts 5-dehydroepisterol into ergosta-5,7,22,24(28)-tetraen-3beta-ol by forming the C-22(23) double bond in the sterol side chain. Finally, ergosta-5,7,22,24(28)-tetraen-3beta-ol is substrate of the C-24(28) sterol reductase erg4 to produce ergosterol. In the genus Schizosaccharomyces, a second route exists between lanosterol and fecosterol, via the methylation of lanosterol to eburicol by erg6, followed by C14-demethylation by erg11/cyp1 and C4-demethylation by the demethylation complex erg25-erg26-erg27. This Schizosaccharomyces pombe (strain 972 / ATCC 24843) (Fission yeast) protein is Delta(14)-sterol reductase erg24.